A 251-amino-acid polypeptide reads, in one-letter code: Cell division protein ZapD (251 aa).

This sequence belongs to the ZapD family. Interacts with FtsZ.

The protein localises to the cytoplasm. Cell division factor that enhances FtsZ-ring assembly. Directly interacts with FtsZ and promotes bundling of FtsZ protofilaments, with a reduction in FtsZ GTPase activity. The sequence is that of Cell division protein ZapD from Burkholderia thailandensis (strain ATCC 700388 / DSM 13276 / CCUG 48851 / CIP 106301 / E264).